We begin with the raw amino-acid sequence, 1094 residues long: Potassium-transporting ATPase alpha chain 2 (1094 aa).

Basic and acidic residues predominate over residues 1 to 21 (MAGGAHRADRATGEERKEGGG). Residues 1-37 (MAGGAHRADRATGEERKEGGGRWRAPHSPSPPGPRGC) are disordered. A compositionally biased stretch (pro residues) spans 28 to 37 (SPSPPGPRGC). Over 56-157 (RYCTLLLFQR…NALTPPKQTP (102 aa)) the chain is Cytoplasmic. The helical transmembrane segment at 158–178 (EIIKFLKQMVGGFSILLWVGA) threads the bilayer. Topologically, residues 179-201 (VLCWIAFGIQYVSNPSASLDRVY) are lumenal. The chain crosses the membrane as a helical span at residues 202–222 (LGTVLAVVVILTGIFAYYQEA). Residues 223–358 (KSTNIMASFC…NEKTPIAIEI (136 aa)) are Cytoplasmic-facing. Residues 286–305 (SSLTGESEPQSRSSGFTHEN) form a disordered region. A helical membrane pass occupies residues 359–378 (EHFVHIVAGVAVSVGILFFI). Over 379–390 (IAVCMKYHVLDA) the chain is Lumenal. A helical transmembrane segment spans residues 391 to 408 (IIFLIAIIVANVPEGLLA). Residues 409 to 842 (TVTVALSLTA…EEGRLIFDNL (434 aa)) are Cytoplasmic-facing. The active-site 4-aspartylphosphate intermediate is Asp446. 2 residues coordinate Mg(2+): Asp787 and Asp791. The chain crosses the membrane as a helical span at residues 843-862 (KKTIAYTLTKNIAELCPFLI). Residues 863–872 (YIILGLPLPI) are Lumenal-facing. The chain crosses the membrane as a helical span at residues 873 to 893 (GTITLLFIDLGTDIIPSIALA). Topologically, residues 894-913 (YEKAESDIMNRKPRHKKKDR) are cytoplasmic. The helical transmembrane segment at 914–936 (LVNQQLAVYSYLHIGLMQALGAF) threads the bilayer. Topologically, residues 937–988 (LVYFTVYAQQGFRPTSLFHLRIAWDSDHLNDLEDNYGQEWTSYQRQYLEWTG) are lumenal. A helical transmembrane segment spans residues 989-1008 (YTAFFVGIMVQQIADLIIRK). Topologically, residues 1009 to 1022 (TRKNSIFKQGLFRN) are cytoplasmic. Ser1013 is subject to Phosphoserine; by PKA. Residues 1023-1041 (KVIWVGIASQIIVALLLSY) traverse the membrane as a helical segment. The Lumenal portion of the chain corresponds to 1042 to 1056 (GLGSITALNFTMLKA). A helical transmembrane segment spans residues 1057 to 1077 (QYWFVAVPHAILIWVYDEMRK). Residues 1078–1094 (LFIRLYPGSWWDKNMYY) are Cytoplasmic-facing.

Belongs to the cation transport ATPase (P-type) (TC 3.A.3) family. Type IIC subfamily. The X(+)/K(+) ATPase pump is composed of a catalytic alpha subunit and an auxiliary non-catalytic beta subunit. The alpha subunit pairs with the beta subunit of gastric H(+)/K(+) ATPase ATP4B or the beta subunit of Na(+)/K(+) ATPases ATP1B1 and ATP1B3; this interaction is required for the formation of a functionally active pump and its targeting at the plasma membrane. As to expression, found in the skin, kidney, distal colon and brain. In the kidney it is found in the connecting tubule, cortical collecting duct and outer medullary collecting duct while in the brain it is specific to choroid plexus and cortex.

It is found in the apical cell membrane. The catalysed reaction is K(+)(out) + ATP + H2O + H(+)(in) = K(+)(in) + ADP + phosphate + 2 H(+)(out). The enzyme catalyses K(+)(out) + Na(+)(in) + ATP + H2O = K(+)(in) + Na(+)(out) + ADP + phosphate + H(+). Its function is as follows. The catalytic subunit of a H(+)/K(+) ATPase and/or Na(+)/K(+) ATPase pump which transports K(+) ions in exchange for Na(+) and/or H(+) ions across the apical membrane of epithelial cells. Uses ATP as an energy source to pump K(+) ions into the cell while transporting Na(+) and/or H(+) ions to the extracellular compartment. Involved in the maintenance of electrolyte homeostasis through K(+) ion absorption in kidney and colon. In the airway epithelium, may play a primary role in mucus acidification regulating its viscosity and clearance. In Oryctolagus cuniculus (Rabbit), this protein is Potassium-transporting ATPase alpha chain 2 (ATP12A).